The chain runs to 197 residues: Small ribosomal subunit protein uS4A (197 aa).

In terms of domain architecture, S4 RNA-binding spans 107-181 (RRLQTQVYKL…VARRNAARKA (75 aa)). The segment at 160 to 197 (PTSPFGGARPGRVARRNAARKAEASGEAADEADEADEE) is disordered. K180 participates in a covalent cross-link: Glycyl lysine isopeptide (Lys-Gly) (interchain with G-Cter in ubiquitin). Phosphoserine is present on S184. The span at 187–197 (AADEADEADEE) shows a compositional bias: acidic residues.

Belongs to the universal ribosomal protein uS4 family. Component of the small ribosomal subunit (SSU). Mature yeast ribosomes consist of a small (40S) and a large (60S) subunit. The 40S small subunit contains 1 molecule of ribosomal RNA (18S rRNA) and 33 different proteins (encoded by 57 genes). The large 60S subunit contains 3 rRNA molecules (25S, 5.8S and 5S rRNA) and 46 different proteins (encoded by 81 genes). Interacts with snoRNA U3. uS11 interacts with MPP10. Component of the ribosomal small subunit (SSU) processome composed of at least 40 protein subunits and snoRNA U3.

The protein localises to the cytoplasm. The protein resides in the nucleus. It is found in the nucleolus. Functionally, component of the ribosome, a large ribonucleoprotein complex responsible for the synthesis of proteins in the cell. The small ribosomal subunit (SSU) binds messenger RNAs (mRNAs) and translates the encoded message by selecting cognate aminoacyl-transfer RNA (tRNA) molecules. The large subunit (LSU) contains the ribosomal catalytic site termed the peptidyl transferase center (PTC), which catalyzes the formation of peptide bonds, thereby polymerizing the amino acids delivered by tRNAs into a polypeptide chain. The nascent polypeptides leave the ribosome through a tunnel in the LSU and interact with protein factors that function in enzymatic processing, targeting, and the membrane insertion of nascent chains at the exit of the ribosomal tunnel. uS4 is involved in nucleolar processing of pre-18S ribosomal RNA and ribosome assembly. The protein is Small ribosomal subunit protein uS4A of Saccharomyces cerevisiae (strain ATCC 204508 / S288c) (Baker's yeast).